Reading from the N-terminus, the 456-residue chain is Histidine--tRNA ligase (456 aa).

The protein belongs to the class-II aminoacyl-tRNA synthetase family. As to quaternary structure, homodimer.

Its subcellular location is the cytoplasm. It catalyses the reaction tRNA(His) + L-histidine + ATP = L-histidyl-tRNA(His) + AMP + diphosphate + H(+). The chain is Histidine--tRNA ligase from Christiangramia forsetii (strain DSM 17595 / CGMCC 1.15422 / KT0803) (Gramella forsetii).